The primary structure comprises 3567 residues: Erythronolide synthase EryA2 (3567 aa).

The Ketosynthase family 3 (KS3) 1 domain occupies 30 to 455 (SDPIAIVSMA…GTNAHVIVEE (426 aa)). Module stretches follow at residues 33-1467 (IAIV…QHLR) and 1491-3485 (IAIV…EHLR). Residue Cys202 is the Acyl-thioester intermediate; for beta-ketoacyl synthase 1 activity of the active site. Catalysis depends on for beta-ketoacyl synthase 1 activity residues His337 and His377. Residues 560 to 880 (VFLFPGQGSQ…MATAHVSGVD (321 aa)) form an acyltransferase 1 region. Residue Ser651 is the Acyl-ester intermediate; for acyltransferase 1 activity of the active site. The segment at 1132-1297 (GTVLVTGAAS…CTSVAWTPWA (166 aa)) is C2-type beta-ketoacyl reductase 1. Tyr1267 (for C2-type beta-ketoacyl reductase 1 and probable racemase activity) is an active-site residue. The segment at 1364–1385 (GRGGQAEAEPDSGPTGEPAQRL) is disordered. The Carrier 1 domain occupies 1395-1470 (ENLLELVANA…ALAQHLRARL (76 aa)). Ser1430 is modified (O-(pantetheine 4'-phosphoryl)serine). Residues 1488 to 1912 (SEPIAIVGIG…GTNAHVIVEE (425 aa)) enclose the Ketosynthase family 3 (KS3) 2 domain. Cys1661 acts as the Acyl-thioester intermediate; for beta-ketoacyl synthase 2 activity in catalysis. Catalysis depends on for beta-ketoacyl synthase 2 activity residues His1796 and His1834. Positions 2015 to 2331 (LVFPGQGAQW…NLLRAHVHGV (317 aa)) are acyltransferase 2. Ser2105 serves as the catalytic Acyl-ester intermediate; for acyltransferase 2 activity. The N-terminal hotdog fold stretch occupies residues 2377–2502 (HPLLLAAVDV…GTLAQGVAAG (126 aa)). Residues 2377–2645 (HPLLLAAVDV…SLVVRSTGEK (269 aa)) are dehydratase. Residues 2377–2648 (HPLLLAAVDV…VRSTGEKWEQ (272 aa)) form the PKS/mFAS DH domain. The active-site Proton acceptor; for dehydratase activity is His2409. The C-terminal hotdog fold stretch occupies residues 2514 to 2648 (AVRIPLDDHY…VRSTGEKWEQ (135 aa)). Asp2571 (proton donor; for dehydratase activity) is an active-site residue. The enoyl reductase stretch occupies residues 2831–3131 (GAIDSVAFEP…RGRHVGKLVL (301 aa)). The active-site For enoyl reductase activity is the Tyr2874. Residues 2964–2973 (HAAAGGVGMA), 3149–3152 (TGTL), 3173–3176 (SRRG), 3202–3203 (DT), Lys3250, and 3272–3273 (FS) contribute to the NADP(+) site. The beta-ketoacyl reductase 2 stretch occupies residues 3141–3317 (GTVLITGGTG…AKALGWGLWA (177 aa)). Tyr3287 functions as the For beta-ketoacyl reductase 2 activity in the catalytic mechanism. In terms of domain architecture, Carrier 2 spans 3413–3488 (AGLAELVRSH…AVAEHLRDRL (76 aa)). At Ser3448 the chain carries O-(pantetheine 4'-phosphoryl)serine.

Homodimer. Erythronolide synthase is composed of EryAI, EryAII and EryAIII multimodular (2 modules) polypeptides each coding for a functional synthase subunit which participates in 2 of the six FAS-like elongation steps required for formation of the polyketide. Module 1, 2, 3, 4, 5, and 6 participating in biosynthesis steps 1, 2, 3, 4, 5, and 6, respectively. It depends on pantetheine 4'-phosphate as a cofactor.

The enzyme catalyses 6 (S)-methylmalonyl-CoA + propanoyl-CoA + 6 NADPH + 12 H(+) = 6-deoxyerythronolide B + 6 CO2 + 6 NADP(+) + 7 CoA + H2O. It participates in antibiotic biosynthesis; erythromycin biosynthesis. In terms of biological role, involved in the biosynthesis of antibiotic erythromycin via the biosynthesis of its aglycone precursor, 6-deoxyerythronolide B (6-dEB). The chain is Erythronolide synthase EryA2 from Saccharopolyspora erythraea (Streptomyces erythraeus).